The chain runs to 330 residues: Mas-related G-protein coupled receptor member X2 (330 aa).

The Extracellular segment spans residues 1–33 (MDPTTLVWGTESTTMNGNDQALPLLCGKETLIL). The chain crosses the membrane as a helical span at residues 34-54 (VVLILFIALVGLVGNAFVLWL). The Cytoplasmic segment spans residues 55–63 (LGFRMRRNA). A helical transmembrane segment spans residues 64–84 (FSVYVLSLAGADFLFLCFPMI). The Extracellular portion of the chain corresponds to 85–96 (NCLAYLINFFHS). A helical transmembrane segment spans residues 97–117 (ISINFPSFFTTVMTCAYLAGL). Residues 118 to 144 (SMLSAISTERCLSVLWPIWYRSRRPRH) lie on the Cytoplasmic side of the membrane. The chain crosses the membrane as a helical span at residues 145–165 (LSAVMCVLLWALSLLLSILEG). Residues 166 to 184 (KFCGFLFSDGDSGWCQTFD) lie on the Extracellular side of the membrane. Residues 185-205 (FITAAWLMFLFVVLCGSSLAL) form a helical membrane-spanning segment. The Cytoplasmic portion of the chain corresponds to 206–228 (LVRILCGSRGLPLTRLYLTILLT). The chain crosses the membrane as a helical span at residues 229–249 (VLIFLLCGLPFGIQWFLILWI). Residues 250–264 (WKNSDVLFCHIHPVS) lie on the Extracellular side of the membrane. The chain crosses the membrane as a helical span at residues 265-285 (VVLSSFNSSANPIIYFFVGSF). Residues 286 to 330 (RKQWRLRQPVLKLALQRALQDTAEVDHSEGCFSQGTLEMSGSSLV) are Cytoplasmic-facing.

Belongs to the G-protein coupled receptor 1 family. Mas subfamily.

It is found in the cell membrane. Functionally, mast cell-specific receptor for basic secretagogues, i.e. cationic amphiphilic drugs, as well as endo- or exogenous peptides, consisting of a basic head group and a hydrophobic core. Recognizes and binds small molecules containing a cyclized tetrahydroisoquinoline (THIQ), such as non-steroidal neuromuscular blocking drugs (NMBDs), including tubocurarine and atracurium. In response to these compounds, mediates pseudo-allergic reactions characterized by histamine release, inflammation and airway contraction. This chain is Mas-related G-protein coupled receptor member X2 (MRGPRX2), found in Trachypithecus francoisi (Francois' leaf monkey).